Reading from the N-terminus, the 910-residue chain is Protein translocase subunit SecA (910 aa).

ATP is bound by residues Q89, 107 to 111, and D502; that span reads GEGKT. Residues C894, C896, C905, and H906 each coordinate Zn(2+).

The protein belongs to the SecA family. In terms of assembly, monomer and homodimer. Part of the essential Sec protein translocation apparatus which comprises SecA, SecYEG and auxiliary proteins SecDF-YajC and YidC. Requires Zn(2+) as cofactor.

The protein resides in the cell inner membrane. Its subcellular location is the cytoplasm. The enzyme catalyses ATP + H2O + cellular proteinSide 1 = ADP + phosphate + cellular proteinSide 2.. Part of the Sec protein translocase complex. Interacts with the SecYEG preprotein conducting channel. Has a central role in coupling the hydrolysis of ATP to the transfer of proteins into and across the cell membrane, serving both as a receptor for the preprotein-SecB complex and as an ATP-driven molecular motor driving the stepwise translocation of polypeptide chains across the membrane. The protein is Protein translocase subunit SecA of Chelativorans sp. (strain BNC1).